A 481-amino-acid chain; its full sequence is MITIEQLLDILKKDHNFREVLDADGYHYHYQGLSFERLSYDSRQVDGKTLFFAKGATFKADYLKEAITNGLQLYISEVDYELGIPVVLVTDIKKAMSLIAMAFYGNPQEKLKLLAFTGTKGKTTAAYFAYHMLKESYKPAMFSTMNTTLDGKTFFKSQLTTPESLDLFAMMAECVTNGMTHLIMEVSSQAYLVDRVYGLTFDVGVFLNISPDHIGPIEHPTFEDYFYHKRLLMENSRAVVINSGMDHFSFLADQVADQEHMFYGPLSDNQITTSQAFSFEAKGQLAGHYDIQLIGHFNQENAMAAGLACLRLGASLADIQKGIAKTRVPGRMEVLTMTNHAKVFVDYAHNGDSLEKLLSVVEEHQTGKLMLILGAPGNKGESRRADFGRVIHQHPNLTVILTADDPNFEDPEDISQEIASHIARPVEIISDREQAIQKAMSLCQGAKDAVIIAGKGADAYQIVKGQQVAYAGDLAIAKHYL.

Serine 42 is a UDP-N-acetyl-alpha-D-muramoyl-L-alanyl-D-glutamate binding site. An ATP-binding site is contributed by 118–124; sequence GTKGKTT. UDP-N-acetyl-alpha-D-muramoyl-L-alanyl-D-glutamate is bound by residues glutamine 158, 160-161, serine 187, and arginine 195; that span reads TT. Lysine 229 is modified (N6-carboxylysine). The L-lysine recognition motif motif lies at 404–407; the sequence is DDPN.

It belongs to the MurCDEF family. MurE subfamily. Carboxylation is probably crucial for Mg(2+) binding and, consequently, for the gamma-phosphate positioning of ATP.

The protein localises to the cytoplasm. It carries out the reaction UDP-N-acetyl-alpha-D-muramoyl-L-alanyl-D-glutamate + L-lysine + ATP = UDP-N-acetyl-alpha-D-muramoyl-L-alanyl-gamma-D-glutamyl-L-lysine + ADP + phosphate + H(+). Its pathway is cell wall biogenesis; peptidoglycan biosynthesis. Functionally, catalyzes the addition of L-lysine to the nucleotide precursor UDP-N-acetylmuramoyl-L-alanyl-D-glutamate (UMAG) in the biosynthesis of bacterial cell-wall peptidoglycan. The chain is UDP-N-acetylmuramoyl-L-alanyl-D-glutamate--L-lysine ligase from Streptococcus pyogenes serotype M6 (strain ATCC BAA-946 / MGAS10394).